We begin with the raw amino-acid sequence, 540 residues long: Acetyl-coenzyme A carboxylase carboxyl transferase subunit beta, chloroplastic (540 aa).

The tract at residues 229 to 249 (YSDNGSSSIRTRTSTSSGSSY) is disordered. Positions 233–248 (GSSSIRTRTSTSSGSS) are enriched in low complexity. In terms of domain architecture, CoA carboxyltransferase N-terminal spans 267 to 538 (LWVQCENCYA…TFHPLKSNKV (272 aa)). Cysteine 271, cysteine 274, cysteine 290, and cysteine 293 together coordinate Zn(2+). The C4-type zinc-finger motif lies at 271 to 293 (CENCYALNYNKLFRSKMNVCEQC).

The protein belongs to the AccD/PCCB family. Acetyl-CoA carboxylase is a heterohexamer composed of biotin carboxyl carrier protein, biotin carboxylase and 2 subunits each of ACCase subunit alpha and ACCase plastid-coded subunit beta (accD). Zn(2+) serves as cofactor.

The protein localises to the plastid. It is found in the chloroplast stroma. It catalyses the reaction N(6)-carboxybiotinyl-L-lysyl-[protein] + acetyl-CoA = N(6)-biotinyl-L-lysyl-[protein] + malonyl-CoA. It functions in the pathway lipid metabolism; malonyl-CoA biosynthesis; malonyl-CoA from acetyl-CoA: step 1/1. In terms of biological role, component of the acetyl coenzyme A carboxylase (ACC) complex. Biotin carboxylase (BC) catalyzes the carboxylation of biotin on its carrier protein (BCCP) and then the CO(2) group is transferred by the transcarboxylase to acetyl-CoA to form malonyl-CoA. The sequence is that of Acetyl-coenzyme A carboxylase carboxyl transferase subunit beta, chloroplastic from Amborella trichopoda.